A 380-amino-acid chain; its full sequence is Succinyl-diaminopimelate desuccinylase (380 aa).

His69 lines the Zn(2+) pocket. Residue Asp71 is part of the active site. Position 102 (Asp102) interacts with Zn(2+). Residue Glu135 is the Proton acceptor of the active site. Positions 136, 164, and 353 each coordinate Zn(2+).

This sequence belongs to the peptidase M20A family. DapE subfamily. As to quaternary structure, homodimer. Zn(2+) is required as a cofactor. Requires Co(2+) as cofactor.

It catalyses the reaction N-succinyl-(2S,6S)-2,6-diaminopimelate + H2O = (2S,6S)-2,6-diaminopimelate + succinate. Its pathway is amino-acid biosynthesis; L-lysine biosynthesis via DAP pathway; LL-2,6-diaminopimelate from (S)-tetrahydrodipicolinate (succinylase route): step 3/3. In terms of biological role, catalyzes the hydrolysis of N-succinyl-L,L-diaminopimelic acid (SDAP), forming succinate and LL-2,6-diaminopimelate (DAP), an intermediate involved in the bacterial biosynthesis of lysine and meso-diaminopimelic acid, an essential component of bacterial cell walls. This Phenylobacterium zucineum (strain HLK1) protein is Succinyl-diaminopimelate desuccinylase.